A 932-amino-acid chain; its full sequence is MTEFLPFVARHIGPRHEDERAMLAALGLPSMETLITQAVPASIRLNRALNLPAALSEADALAELGTIMGRNVVKKSFIGAGYHGVHTPPVIQRNLFENPAWYTAYTPYQSEISQGRLELLFHFQTLVAELTGLPVACASLLDEATAVAEAIGVACRHHRDKRSRILLAGELHPQTVDVVNTRAEPLGWEIATGSDVDDNTAAIVVPWPDTRGVYGDFAKVIADAKAKGALVIAVADPLALTIMEAPARWGADMAVGSMQRYGVPMGFGGPHAAYLAVSEALTRIIPGRIVGQSVDAHGRAAYRLALQTREQHIRRDKATSNICTAQALLANMAAAFAIWHGPAGLQAIATRVAALAARFAAALKAAGVEIAGESLFDTVTAKVPGKAAAIAAEADKGGRLIRIIDADTVGVTFDETSTEEDLTALASLFGAKPVGGDTVLVPGKERGEGFLTQEVFHSHRSETEMMRFLRRLADKDLALDRAMIPLGSCTMKLNAAAEMMPVSWNTVANLHPFAPAEQVQGYAKMTSDLEAWLCEITGFAGVSLQPNAGSQGEYAGLMAIRHYHQARGQGHRNICLIPSSAHGTNPASASMAGMSVVVVNCRPDGDIDIDDLKAKAEKHRDNLAAFMITYPSTYGVFEEGIKAFCEIVHDNGGQVYFDGANLNALVGLARPADIGADVCHMNLHKTFCIPHGGGGPGVGPIGVAKHLVPYLPGHVEAGSEHAVAAAQFGSASILVITWMYIRMMGGAGLKKATEAAILNANYIAHRLKGVYPILYTGAHDRVAHECIVDTRVLKDSAGITVEDVAKRLIDYGFHAPTMSWPVAGTLMIEPTESEPKLEIDRLCDAMIAIAGEAKKVADGVWPADDNPLANAPHTASDTLATEWKHPYTREEAVFPGGAFDPTAKYWPPVSRVDNVGGDRNLICSCPPVAAYG.

Lysine 685 is subject to N6-(pyridoxal phosphate)lysine.

This sequence belongs to the GcvP family. In terms of assembly, the glycine cleavage system is composed of four proteins: P, T, L and H. Pyridoxal 5'-phosphate is required as a cofactor.

It carries out the reaction N(6)-[(R)-lipoyl]-L-lysyl-[glycine-cleavage complex H protein] + glycine + H(+) = N(6)-[(R)-S(8)-aminomethyldihydrolipoyl]-L-lysyl-[glycine-cleavage complex H protein] + CO2. In terms of biological role, the glycine cleavage system catalyzes the degradation of glycine. The P protein binds the alpha-amino group of glycine through its pyridoxal phosphate cofactor; CO(2) is released and the remaining methylamine moiety is then transferred to the lipoamide cofactor of the H protein. In Brucella melitensis biotype 2 (strain ATCC 23457), this protein is Glycine dehydrogenase (decarboxylating).